We begin with the raw amino-acid sequence, 514 residues long: 2-isopropylmalate synthase (514 aa).

One can recognise a Pyruvate carboxyltransferase domain in the interval L5 to V268. Mn(2+) is bound by residues D14, H202, H204, and N239. The segment at K395–A514 is regulatory domain.

Belongs to the alpha-IPM synthase/homocitrate synthase family. LeuA type 1 subfamily. Homodimer. It depends on Mn(2+) as a cofactor.

It is found in the cytoplasm. It carries out the reaction 3-methyl-2-oxobutanoate + acetyl-CoA + H2O = (2S)-2-isopropylmalate + CoA + H(+). It functions in the pathway amino-acid biosynthesis; L-leucine biosynthesis; L-leucine from 3-methyl-2-oxobutanoate: step 1/4. In terms of biological role, catalyzes the condensation of the acetyl group of acetyl-CoA with 3-methyl-2-oxobutanoate (2-ketoisovalerate) to form 3-carboxy-3-hydroxy-4-methylpentanoate (2-isopropylmalate). The protein is 2-isopropylmalate synthase of Burkholderia vietnamiensis (strain G4 / LMG 22486) (Burkholderia cepacia (strain R1808)).